A 253-amino-acid chain; its full sequence is Ribosomal RNA small subunit methyltransferase A (253 aa).

S-adenosyl-L-methionine is bound by residues H12, L14, G39, E60, D81, and N104.

It belongs to the class I-like SAM-binding methyltransferase superfamily. rRNA adenine N(6)-methyltransferase family. RsmA subfamily.

The protein localises to the cytoplasm. The catalysed reaction is adenosine(1518)/adenosine(1519) in 16S rRNA + 4 S-adenosyl-L-methionine = N(6)-dimethyladenosine(1518)/N(6)-dimethyladenosine(1519) in 16S rRNA + 4 S-adenosyl-L-homocysteine + 4 H(+). Its function is as follows. Specifically dimethylates two adjacent adenosines (A1518 and A1519) in the loop of a conserved hairpin near the 3'-end of 16S rRNA in the 30S particle. May play a critical role in biogenesis of 30S subunits. In Acidovorax ebreus (strain TPSY) (Diaphorobacter sp. (strain TPSY)), this protein is Ribosomal RNA small subunit methyltransferase A.